A 185-amino-acid polypeptide reads, in one-letter code: Large ribosomal subunit protein uL15 (185 aa).

The disordered stretch occupies residues 1 to 51 (MDLSSLRPAAGAVKNKKRVGRGQGSGNGTTAGKGNKGQQARSGYQKPINEG). The span at 21 to 35 (RGQGSGNGTTAGKGN) shows a compositional bias: gly residues.

Belongs to the universal ribosomal protein uL15 family. Part of the 50S ribosomal subunit.

Its function is as follows. Binds to the 23S rRNA. This chain is Large ribosomal subunit protein uL15, found in Chlorobium phaeobacteroides (strain DSM 266 / SMG 266 / 2430).